A 100-amino-acid chain; its full sequence is Small ribosomal subunit protein uS14m (100 aa).

It belongs to the universal ribosomal protein uS14 family.

It localises to the mitochondrion. In Vicia faba (Broad bean), this protein is Small ribosomal subunit protein uS14m (RPS14).